We begin with the raw amino-acid sequence, 382 residues long: Succinyl-diaminopimelate desuccinylase (382 aa).

Residue H68 coordinates Zn(2+). D70 is a catalytic residue. D101 lines the Zn(2+) pocket. The Proton acceptor role is filled by E135. Residues E136, E164, and H350 each coordinate Zn(2+).

Belongs to the peptidase M20A family. DapE subfamily. Homodimer. It depends on Zn(2+) as a cofactor. Co(2+) serves as cofactor.

It carries out the reaction N-succinyl-(2S,6S)-2,6-diaminopimelate + H2O = (2S,6S)-2,6-diaminopimelate + succinate. The protein operates within amino-acid biosynthesis; L-lysine biosynthesis via DAP pathway; LL-2,6-diaminopimelate from (S)-tetrahydrodipicolinate (succinylase route): step 3/3. Its function is as follows. Catalyzes the hydrolysis of N-succinyl-L,L-diaminopimelic acid (SDAP), forming succinate and LL-2,6-diaminopimelate (DAP), an intermediate involved in the bacterial biosynthesis of lysine and meso-diaminopimelic acid, an essential component of bacterial cell walls. The polypeptide is Succinyl-diaminopimelate desuccinylase (Acidithiobacillus ferrooxidans (strain ATCC 23270 / DSM 14882 / CIP 104768 / NCIMB 8455) (Ferrobacillus ferrooxidans (strain ATCC 23270))).